Consider the following 281-residue polypeptide: MAQKIIRTGSIEIANDKPMVVFGGMNVLESRDMAMQVCEEYVRVTEKLGIPYVFKASFDKANRSSVNSYRGPGLEEGMRIFEEIKRTFNVPLITDVHEPHQAAVVAEVCDIIQLPAFLSRQTDLVVAMAKTGAIINIKKAQFLAPQEMKHILTKCEEAGNDQLILCERGSSFGYNNLVVDMLGFGIMKQFEYPVLFDVTHALQMPGGRSDSAGGRRAQVLDLAKAGISQNLAGLFLEAHPDPDNAKCDGPCALRLDKLEPFLAQLKSLDELVKSFPIVETA.

The protein belongs to the KdsA family.

Its subcellular location is the cytoplasm. The enzyme catalyses D-arabinose 5-phosphate + phosphoenolpyruvate + H2O = 3-deoxy-alpha-D-manno-2-octulosonate-8-phosphate + phosphate. The protein operates within carbohydrate biosynthesis; 3-deoxy-D-manno-octulosonate biosynthesis; 3-deoxy-D-manno-octulosonate from D-ribulose 5-phosphate: step 2/3. It functions in the pathway bacterial outer membrane biogenesis; lipopolysaccharide biosynthesis. This is 2-dehydro-3-deoxyphosphooctonate aldolase from Pseudomonas syringae pv. tomato (strain ATCC BAA-871 / DC3000).